A 576-amino-acid chain; its full sequence is Formate--tetrahydrofolate ligase 2 (576 aa).

Residue 69 to 76 (TPLGEGKT) coordinates ATP.

It belongs to the formate--tetrahydrofolate ligase family.

It catalyses the reaction (6S)-5,6,7,8-tetrahydrofolate + formate + ATP = (6R)-10-formyltetrahydrofolate + ADP + phosphate. It participates in one-carbon metabolism; tetrahydrofolate interconversion. The polypeptide is Formate--tetrahydrofolate ligase 2 (Rubrobacter xylanophilus (strain DSM 9941 / JCM 11954 / NBRC 16129 / PRD-1)).